Consider the following 168-residue polypeptide: G/U mismatch-specific DNA glycosylase (168 aa).

Belongs to the uracil-DNA glycosylase (UDG) superfamily. TDG/mug family. As to quaternary structure, binds DNA as a monomer.

The protein localises to the cytoplasm. It catalyses the reaction Specifically hydrolyzes mismatched double-stranded DNA and polynucleotides, releasing free uracil.. Its function is as follows. Excises ethenocytosine and uracil, which can arise by alkylation or deamination of cytosine, respectively, from the corresponding mispairs with guanine in ds-DNA. It is capable of hydrolyzing the carbon-nitrogen bond between the sugar-phosphate backbone of the DNA and the mispaired base. The complementary strand guanine functions in substrate recognition. Required for DNA damage lesion repair in stationary-phase cells. The protein is G/U mismatch-specific DNA glycosylase of Salmonella agona (strain SL483).